The sequence spans 123 residues: Small ribosomal subunit protein uS13 (123 aa).

The disordered stretch occupies residues 95–123 (GLPVRGQKTKTNARTRKGPKRAISGKKNK).

The protein belongs to the universal ribosomal protein uS13 family. Part of the 30S ribosomal subunit. Forms a loose heterodimer with protein S19. Forms two bridges to the 50S subunit in the 70S ribosome.

In terms of biological role, located at the top of the head of the 30S subunit, it contacts several helices of the 16S rRNA. In the 70S ribosome it contacts the 23S rRNA (bridge B1a) and protein L5 of the 50S subunit (bridge B1b), connecting the 2 subunits; these bridges are implicated in subunit movement. Contacts the tRNAs in the A and P-sites. The chain is Small ribosomal subunit protein uS13 from Clostridium novyi (strain NT).